The primary structure comprises 409 residues: tRNA (guanine-N(7)-)-methyltransferase non-catalytic subunit wuho (409 aa).

A disordered region spans residues 48–72; the sequence is DADSDSDEESTQQPQKPPTNGNGTA. The span at 58–72 shows a compositional bias: polar residues; that stretch reads TQQPQKPPTNGNGTA. WD repeat units follow at residues 72–111, 122–161, 167–206, and 210–252; these read ADNV…DETN, MVSR…CKKP, GHMS…SIET, and GHGE…EVAR.

Belongs to the WD repeat TRM82 family. Forms a heterodimer with the catalytic subunit.

It is found in the nucleus. The protein operates within tRNA modification; N(7)-methylguanine-tRNA biosynthesis. Functionally, required for the formation of N(7)-methylguanine at position 46 (m7G46) in tRNA. In the complex, it is required to stabilize and induce conformational changes of the catalytic subunit. This is tRNA (guanine-N(7)-)-methyltransferase non-catalytic subunit wuho from Aedes aegypti (Yellowfever mosquito).